A 347-amino-acid chain; its full sequence is NADH-quinone oxidoreductase subunit H (347 aa).

9 helical membrane-spanning segments follow: residues 13–33 (IIMIGQSLLLLVCLLVFIAYV), 50–70 (PNVVGPFGLFQSFADLLKFVF), 82–102 (AVFLLAPLVTVLLALSTWAVV), 115–135 (VGILYIFAISSLEVYGIIMGG), 161–181 (IGFVIVTVLLCVGSLNLTDIV), 198–218 (FLDWHWLSLFPMFIIFFISAL), 263–283 (CSLTTILFLGGWLPPVDIWIL), 286–306 (VPGIIWFMLKACFVFFMFAMV), and 321–341 (LGWKVFLPLSLAMVIIVAFVL).

The protein belongs to the complex I subunit 1 family. NDH-1 is composed of 14 different subunits. Subunits NuoA, H, J, K, L, M, N constitute the membrane sector of the complex.

Its subcellular location is the cell inner membrane. It carries out the reaction a quinone + NADH + 5 H(+)(in) = a quinol + NAD(+) + 4 H(+)(out). In terms of biological role, NDH-1 shuttles electrons from NADH, via FMN and iron-sulfur (Fe-S) centers, to quinones in the respiratory chain. The immediate electron acceptor for the enzyme in this species is believed to be ubiquinone. Couples the redox reaction to proton translocation (for every two electrons transferred, four hydrogen ions are translocated across the cytoplasmic membrane), and thus conserves the redox energy in a proton gradient. This subunit may bind ubiquinone. The sequence is that of NADH-quinone oxidoreductase subunit H from Rhizobium leguminosarum bv. trifolii (strain WSM2304).